Here is a 537-residue protein sequence, read N- to C-terminus: Proline--tRNA ligase (537 aa).

This sequence belongs to the class-II aminoacyl-tRNA synthetase family. ProS type 3 subfamily. Homodimer.

It is found in the cytoplasm. The catalysed reaction is tRNA(Pro) + L-proline + ATP = L-prolyl-tRNA(Pro) + AMP + diphosphate. Functionally, catalyzes the attachment of proline to tRNA(Pro) in a two-step reaction: proline is first activated by ATP to form Pro-AMP and then transferred to the acceptor end of tRNA(Pro). The chain is Proline--tRNA ligase from Nanoarchaeum equitans (strain Kin4-M).